Reading from the N-terminus, the 1049-residue chain is Vacuolar membrane protease (1049 aa).

Topologically, residues 1-11 (MKCYNPSAFVP) are cytoplasmic. The helical transmembrane segment at 12 to 32 (MAVTLVTVIIYLGVFIPLLII) threads the bilayer. Over 33–438 (QETVPSAPDD…TVFAVFKLRT (406 aa)) the chain is Vacuolar. The N-linked (GlcNAc...) asparagine glycan is linked to N50. Positions 114–135 (DAEAPESVPSPSNSNDGSAERY) are disordered. N157 carries N-linked (GlcNAc...) asparagine glycosylation. Residues H221 and D233 each coordinate Zn(2+). The Proton acceptor role is filled by E267. Zn(2+) contacts are provided by E268, E293, and H365. Residues 439-459 (LFAWSLTLLIAAPLMLFAVSY) traverse the membrane as a helical segment. Topologically, residues 460–495 (LLNRQDKFYFFAGSIKAKGPEDEPISLGGWRGAFRY) are cytoplasmic. The chain crosses the membrane as a helical span at residues 496-516 (PITLIITCAITFGCASLINKI). Residues 517 to 526 (NPMIVYSSPY) are Vacuolar-facing. A helical membrane pass occupies residues 527 to 547 (SVWSMSASLFFSIFWFIMAGC). Over 548 to 557 (NFVRPSALQR) the chain is Cytoplasmic. The helical transmembrane segment at 558–578 (GYAFMWLFVFGWIILVAATVY) threads the bilayer. Residues 579–585 (EDRFKIS) lie on the Vacuolar side of the membrane. Residues 586 to 606 (GGYLFVFYEAAIFLATLIAIG) traverse the membrane as a helical segment. The Cytoplasmic segment spans residues 607 to 740 (EQFALPKKST…LPIWTWLVQY (134 aa)). A disordered region spans residues 621–686 (SQLDHDGNQD…IGGGAPTQRS (66 aa)). Basic and acidic residues predominate over residues 622 to 633 (QLDHDGNQDSHH). A compositionally biased stretch (acidic residues) spans 655–664 (GQEEDPEDNV). The helical transmembrane segment at 741–761 (LLVGPFILIVVGQVGLFLVAA) threads the bilayer. The Vacuolar portion of the chain corresponds to 762-773 (LHQTGTDGSPLL). The chain crosses the membrane as a helical span at residues 774–794 (LPYLVVAVFSILLLLPVTPFI). Residues 795–801 (HRLTHHM) are Cytoplasmic-facing. Residues 802–822 (PTFFFLVFIGTLIYNLVAFPF) form a helical membrane-spanning segment. The Vacuolar segment spans residues 823 to 1049 (SPNNRYKAYF…LVEGSKRFVV (227 aa)). A glycan (N-linked (GlcNAc...) asparagine) is linked at N914.

It belongs to the peptidase M28 family. The cofactor is Zn(2+).

It is found in the vacuole membrane. In terms of biological role, may be involved in vacuolar sorting and osmoregulation. This chain is Vacuolar membrane protease, found in Botryotinia fuckeliana (strain B05.10) (Noble rot fungus).